The sequence spans 92 residues: PqqA binding protein (92 aa).

The protein belongs to the PqqD family. As to quaternary structure, monomer. Interacts with PqqE.

The protein operates within cofactor biosynthesis; pyrroloquinoline quinone biosynthesis. Functions as a PqqA binding protein and presents PqqA to PqqE, in the pyrroloquinoline quinone (PQQ) biosynthetic pathway. The sequence is that of PqqA binding protein from Pseudomonas aeruginosa (strain UCBPP-PA14).